A 60-amino-acid polypeptide reads, in one-letter code: Large ribosomal subunit protein uL30 (60 aa).

The protein belongs to the universal ribosomal protein uL30 family. As to quaternary structure, part of the 50S ribosomal subunit.

The chain is Large ribosomal subunit protein uL30 from Desulforapulum autotrophicum (strain ATCC 43914 / DSM 3382 / VKM B-1955 / HRM2) (Desulfobacterium autotrophicum).